Reading from the N-terminus, the 83-residue chain is BmKBT-like peptide (83 aa).

Positions 1–19 are cleaved as a signal peptide; it reads MKAALLLVISTLMLIGVLT. The 61-residue stretch at 21-81 folds into the LCN-type CS-alpha/beta domain; it reads KSGYPIQHDG…TWSRETNKCR (61 aa). 4 disulfide bridges follow: cysteine 31/cysteine 80, cysteine 35/cysteine 54, cysteine 41/cysteine 61, and cysteine 45/cysteine 63. Residue lysine 83 is a propeptide, removed by a carboxypeptidase.

It belongs to the long (4 C-C) scorpion toxin superfamily. Sodium channel inhibitor family. Beta subfamily. As to expression, expressed by the venom gland.

It is found in the secreted. In terms of biological role, sodium channel inhibitor. Possesses potent toxicity in mice but induces only paralysis in cotton bollworm. The polypeptide is BmKBT-like peptide (Olivierus martensii (Manchurian scorpion)).